Here is a 225-residue protein sequence, read N- to C-terminus: NAD(P)H-quinone oxidoreductase subunit K, chloroplastic (225 aa).

Positions 43, 44, 108, and 139 each coordinate [4Fe-4S] cluster.

The protein belongs to the complex I 20 kDa subunit family. In terms of assembly, NDH is composed of at least 16 different subunits, 5 of which are encoded in the nucleus. The cofactor is [4Fe-4S] cluster.

The protein localises to the plastid. It localises to the chloroplast thylakoid membrane. It carries out the reaction a plastoquinone + NADH + (n+1) H(+)(in) = a plastoquinol + NAD(+) + n H(+)(out). The catalysed reaction is a plastoquinone + NADPH + (n+1) H(+)(in) = a plastoquinol + NADP(+) + n H(+)(out). In terms of biological role, NDH shuttles electrons from NAD(P)H:plastoquinone, via FMN and iron-sulfur (Fe-S) centers, to quinones in the photosynthetic chain and possibly in a chloroplast respiratory chain. The immediate electron acceptor for the enzyme in this species is believed to be plastoquinone. Couples the redox reaction to proton translocation, and thus conserves the redox energy in a proton gradient. This Draba nemorosa (Woodland whitlowgrass) protein is NAD(P)H-quinone oxidoreductase subunit K, chloroplastic.